Consider the following 121-residue polypeptide: uncharacterized protein (121 aa).

This is an uncharacterized protein from Methanocaldococcus jannaschii (strain ATCC 43067 / DSM 2661 / JAL-1 / JCM 10045 / NBRC 100440) (Methanococcus jannaschii).